The primary structure comprises 374 residues: tRNA-specific 2-thiouridylase MnmA (374 aa).

ATP is bound by residues 17 to 24 (GMSGGVDS) and M43. Residues 103-105 (NPD) form an interaction with target base in tRNA region. C108 serves as the catalytic Nucleophile. C108 and C204 are disulfide-bonded. G132 contributes to the ATP binding site. Residues 154-156 (KDQ) are interaction with tRNA. C204 (cysteine persulfide intermediate) is an active-site residue. The interaction with tRNA stretch occupies residues 316–317 (RY).

This sequence belongs to the MnmA/TRMU family.

The protein localises to the cytoplasm. It carries out the reaction S-sulfanyl-L-cysteinyl-[protein] + uridine(34) in tRNA + AH2 + ATP = 2-thiouridine(34) in tRNA + L-cysteinyl-[protein] + A + AMP + diphosphate + H(+). Functionally, catalyzes the 2-thiolation of uridine at the wobble position (U34) of tRNA, leading to the formation of s(2)U34. This chain is tRNA-specific 2-thiouridylase MnmA, found in Pseudomonas putida (strain W619).